We begin with the raw amino-acid sequence, 107 residues long: MCDRDDCASIASRCTGETIICAFVESITPPKIRDKTGTYELKCPFAEGFTMEIGDLFLFHFVFDGSSEKCTRLTPIPKMLAMVYEKLLKDLRKAKKEGKMIISPTAN.

Belongs to the RMI2 family. As to quaternary structure, component of the RMI complex, containing at least top-3, rmh-1 and rmh-2. Component of the BTR double Holliday Junction dissolution complex composed of at least him-6, top-3, rmh-1 and rmif-2, which is involved in double strand break repair in the germline. Interacts with rmh-1; the interaction is direct and is required for mutual stability and localization at nuclear foci. Expressed in the germline.

It localises to the nucleus. Its function is as follows. Essential component of the RMI complex, a complex that plays an important role in the processing of homologous recombination intermediates. Component of the BTR double Holliday Junction dissolution complex, which is involved in homologous recombination during meiotic double strand break in the germline. Plays a role in double strand break repair by positively regulating the accumulation of rad-51 at double strand breaks. Stabilizes and positively regulates the localization of the BTR double Holliday Junction dissolution complex components rmh-1, him-6 and top-3 at nuclear foci during meiotic recombination. Positively regulates meiotic recombination, chiasma formation, and chromosome segregation in meiosis. Positively regulates DNA crossover formation and positioning on chromosome arms (away from the chromosome center) during homologous recombination. This Caenorhabditis elegans protein is RecQ-mediated genome instability protein 2 homolog.